We begin with the raw amino-acid sequence, 276 residues long: Rhomboid protease GlpG (276 aa).

6 helical membrane-spanning segments follow: residues 94–114, 142–162, 169–189, 192–212, 229–249, and 250–270; these read GPVT…MQIL, ALMH…WYLG, LGSG…GYVQ, FSGP…GYVW, LIIF…GMSM, and ANGA…VDSL. Ser201 acts as the Nucleophile in catalysis. His254 is a catalytic residue.

This sequence belongs to the peptidase S54 family.

The protein resides in the cell inner membrane. It carries out the reaction Cleaves type-1 transmembrane domains using a catalytic dyad composed of serine and histidine that are contributed by different transmembrane domains.. In terms of biological role, rhomboid-type serine protease that catalyzes intramembrane proteolysis. The chain is Rhomboid protease GlpG from Escherichia coli O157:H7.